Here is a 227-residue protein sequence, read N- to C-terminus: Cytochrome c oxidase subunit 2 (227 aa).

The Mitochondrial intermembrane portion of the chain corresponds to 1–14; that stretch reads MAYPFQLGLQDATS. The chain crosses the membrane as a helical span at residues 15-45; sequence PIMEELTSFHDHTLMIVFLISSLVLYIILLM. Residues 46 to 59 are Mitochondrial matrix-facing; the sequence is LTTKLTHTSTMDAQ. A helical membrane pass occupies residues 60 to 87; sequence EVETIWTILPAVILILIALPSLRILYMM. At 88 to 227 the chain is on the mitochondrial intermembrane side; it reads DEINNPALTV…HFENWSASMI (140 aa). The Cu cation site is built by histidine 161, cysteine 196, glutamate 198, cysteine 200, histidine 204, and methionine 207. A Mg(2+)-binding site is contributed by glutamate 198.

Belongs to the cytochrome c oxidase subunit 2 family. In terms of assembly, component of the cytochrome c oxidase (complex IV, CIV), a multisubunit enzyme composed of 14 subunits. The complex is composed of a catalytic core of 3 subunits MT-CO1, MT-CO2 and MT-CO3, encoded in the mitochondrial DNA, and 11 supernumerary subunits COX4I, COX5A, COX5B, COX6A, COX6B, COX6C, COX7A, COX7B, COX7C, COX8 and NDUFA4, which are encoded in the nuclear genome. The complex exists as a monomer or a dimer and forms supercomplexes (SCs) in the inner mitochondrial membrane with NADH-ubiquinone oxidoreductase (complex I, CI) and ubiquinol-cytochrome c oxidoreductase (cytochrome b-c1 complex, complex III, CIII), resulting in different assemblies (supercomplex SCI(1)III(2)IV(1) and megacomplex MCI(2)III(2)IV(2)). Found in a complex with TMEM177, COA6, COX18, COX20, SCO1 and SCO2. Interacts with TMEM177 in a COX20-dependent manner. Interacts with COX20. Interacts with COX16. Requires Cu cation as cofactor.

Its subcellular location is the mitochondrion inner membrane. It carries out the reaction 4 Fe(II)-[cytochrome c] + O2 + 8 H(+)(in) = 4 Fe(III)-[cytochrome c] + 2 H2O + 4 H(+)(out). In terms of biological role, component of the cytochrome c oxidase, the last enzyme in the mitochondrial electron transport chain which drives oxidative phosphorylation. The respiratory chain contains 3 multisubunit complexes succinate dehydrogenase (complex II, CII), ubiquinol-cytochrome c oxidoreductase (cytochrome b-c1 complex, complex III, CIII) and cytochrome c oxidase (complex IV, CIV), that cooperate to transfer electrons derived from NADH and succinate to molecular oxygen, creating an electrochemical gradient over the inner membrane that drives transmembrane transport and the ATP synthase. Cytochrome c oxidase is the component of the respiratory chain that catalyzes the reduction of oxygen to water. Electrons originating from reduced cytochrome c in the intermembrane space (IMS) are transferred via the dinuclear copper A center (CU(A)) of subunit 2 and heme A of subunit 1 to the active site in subunit 1, a binuclear center (BNC) formed by heme A3 and copper B (CU(B)). The BNC reduces molecular oxygen to 2 water molecules using 4 electrons from cytochrome c in the IMS and 4 protons from the mitochondrial matrix. The sequence is that of Cytochrome c oxidase subunit 2 (MT-CO2) from Anisomys imitator (Uneven-toothed rat).